We begin with the raw amino-acid sequence, 209 residues long: Xanthine phosphoribosyltransferase 1 (209 aa).

The residue at position 79 (Ser79) is a Phosphoserine.

It localises to the cytoplasm. In terms of biological role, may act as a xanthine phosphoribosyltransferase involved in the synthesis of purine nucleotides. Such activity is however unclear in vivo. The chain is Xanthine phosphoribosyltransferase 1 (XPT1) from Saccharomyces cerevisiae (strain ATCC 204508 / S288c) (Baker's yeast).